Here is a 304-residue protein sequence, read N- to C-terminus: Nod factor export ATP-binding protein I (304 aa).

Residues 6 to 236 (IDFRNVEKRF…EIGCDVIEIY (231 aa)) enclose the ABC transporter domain. 38 to 45 (GPNGAGKT) is an ATP binding site.

This sequence belongs to the ABC transporter superfamily. Lipooligosaccharide exporter (TC 3.A.1.102) family. As to quaternary structure, the complex is composed of two ATP-binding proteins (NodI) and two transmembrane proteins (NodJ).

It is found in the cell inner membrane. In terms of biological role, part of the ABC transporter complex NodIJ involved in the export of the nodulation factors (Nod factors), the bacterial signal molecules that induce symbiosis and subsequent nodulation induction. Nod factors are LCO (lipo-chitin oligosaccharide), a modified beta-1,4-linked N-acetylglucosamine oligosaccharide. This subunit is responsible for energy coupling to the transport system. This is Nod factor export ATP-binding protein I from Burkholderia lata (strain ATCC 17760 / DSM 23089 / LMG 22485 / NCIMB 9086 / R18194 / 383).